The following is a 224-amino-acid chain: UPF0758 protein VSAL_I0192 (224 aa).

The 123-residue stretch at 102-224 (ALTSPEHTKR…IVSFAERGWI (123 aa)) folds into the MPN domain. Residues H173, H175, and D186 each coordinate Zn(2+). Residues 173 to 186 (HNHPSGVAEPSQAD) carry the JAMM motif motif.

It belongs to the UPF0758 family.

This Aliivibrio salmonicida (strain LFI1238) (Vibrio salmonicida (strain LFI1238)) protein is UPF0758 protein VSAL_I0192.